Reading from the N-terminus, the 703-residue chain is MSRADPGKNSEPSESKMSLELRPTAPSDLGRSNEAFQDEDLERQNTPGNSTVRNRVVQSGEQGHAKQDDRQITIEQEPLGNKEDPEDDSEDEHQKGFLERKYDTICEFCRKHRVVLRSTIWAVLLTGFLALVIAACAINFHRALPLFVITLVTIFFVIWDHLMAKYEQRIDDFLSPGRRLLDRHWFWLKWVVWSSLILAIILWLSLDTAKLGQQNLVSFGGLIMYLILLFLFSKHPTRVYWRPVFWGIGLQFLLGLLILRTRPGFVAFDWMGRQVQTFLGYTDTGARFVFGEKYTDHFFAFKILPIVVFFSTVMSMLYYLGLMQWIIRKVGWLMLVTMGSSPIESVVAAGNIFIGQTESPLLVQPYLPHVTKSELHTIMTAGFATIAGSVLGAYISFGVSSTHLLTASVMSAPAALAVAKLFWPETEKPKITLKSAMKMENGDSRNLLEAASQGASSSIPLVANIAANLIAFLALLSFVNSALSWFGSMFNYPELSFELICSYIFMPFSFMMGVDWQDSFMVAKLIGYKTFFNEFVAYDHLSKLINLRKAAGPKFVNGVQQYMSIRSETIATYALCGFANFGSLGIVIGGLTSIAPSRKRDIASGAMRALIAGTIACFMTACIAGILSDTPVDINCHHVLENGRVLSNTTEVVSCCQNLFNSTVAKGPNDVVPGGNFSLYALKSCCNLLKPPTLNCNWIPNKL.

The span at 1-19 shows a compositional bias: basic and acidic residues; the sequence is MSRADPGKNSEPSESKMSL. The tract at residues 1 to 93 is disordered; that stretch reads MSRADPGKNS…DPEDDSEDEH (93 aa). At 1 to 117 the chain is on the cytoplasmic side; the sequence is MSRADPGKNS…FCRKHRVVLR (117 aa). Positions 44-61 are enriched in polar residues; that stretch reads QNTPGNSTVRNRVVQSGE. Residues 63–72 show a composition bias toward basic and acidic residues; it reads GHAKQDDRQI. Residues 118–138 form a helical membrane-spanning segment; it reads STIWAVLLTGFLALVIAACAI. Topologically, residues 139-143 are extracellular; it reads NFHRA. A helical membrane pass occupies residues 144–164; the sequence is LPLFVITLVTIFFVIWDHLMA. The Cytoplasmic segment spans residues 165–188; it reads KYEQRIDDFLSPGRRLLDRHWFWL. The helical transmembrane segment at 189–209 threads the bilayer; that stretch reads KWVVWSSLILAIILWLSLDTA. Residues 210 to 212 lie on the Extracellular side of the membrane; that stretch reads KLG. Residues 213–234 form a helical membrane-spanning segment; sequence QQNLVSFGGLIMYLILLFLFSK. Over 235–242 the chain is Cytoplasmic; that stretch reads HPTRVYWR. Residues 243–262 traverse the membrane as a helical segment; the sequence is PVFWGIGLQFLLGLLILRTR. Residues 263–299 lie on the Extracellular side of the membrane; it reads PGFVAFDWMGRQVQTFLGYTDTGARFVFGEKYTDHFF. The helical transmembrane segment at 300–320 threads the bilayer; sequence AFKILPIVVFFSTVMSMLYYL. Residues 321–344 are Cytoplasmic-facing; that stretch reads GLMQWIIRKVGWLMLVTMGSSPIE. The segment at residues 345 to 363 is an intramembrane region (helical); the sequence is SVVAAGNIFIGQTESPLLV. Residues 364–376 lie on the Cytoplasmic side of the membrane; the sequence is QPYLPHVTKSELH. A helical transmembrane segment spans residues 377 to 399; the sequence is TIMTAGFATIAGSVLGAYISFGV. Residues 400–401 lie on the Extracellular side of the membrane; sequence SS. A helical membrane pass occupies residues 402-423; sequence THLLTASVMSAPAALAVAKLFW. The Cytoplasmic segment spans residues 424–458; that stretch reads PETEKPKITLKSAMKMENGDSRNLLEAASQGASSS. A helical transmembrane segment spans residues 459–484; the sequence is IPLVANIAANLIAFLALLSFVNSALS. Over 485-522 the chain is Extracellular; it reads WFGSMFNYPELSFELICSYIFMPFSFMMGVDWQDSFMV. Positions 523–542 form an intramembrane region, helical; sequence AKLIGYKTFFNEFVAYDHLS. Over 543-581 the chain is Extracellular; that stretch reads KLINLRKAAGPKFVNGVQQYMSIRSETIATYALCGFANF. A helical transmembrane segment spans residues 582 to 592; it reads GSLGIVIGGLT. Residues 593–605 are Cytoplasmic-facing; it reads SIAPSRKRDIASG. Residues 606–628 form a helical membrane-spanning segment; that stretch reads AMRALIAGTIACFMTACIAGILS. The Extracellular segment spans residues 629-703; sequence DTPVDINCHH…LNCNWIPNKL (75 aa).

This sequence belongs to the concentrative nucleoside transporter (CNT) (TC 2.A.41) family. As to quaternary structure, homotrimer.

Its subcellular location is the cell membrane. The catalysed reaction is thymidine(out) + 2 Na(+)(out) = thymidine(in) + 2 Na(+)(in). The enzyme catalyses cytidine(out) + 2 Na(+)(out) = cytidine(in) + 2 Na(+)(in). It carries out the reaction uridine(out) + 2 Na(+)(out) = uridine(in) + 2 Na(+)(in). It catalyses the reaction adenosine(out) + 2 Na(+)(out) = adenosine(in) + 2 Na(+)(in). The catalysed reaction is guanosine(out) + 2 Na(+)(out) = guanosine(in) + 2 Na(+)(in). The enzyme catalyses inosine(out) + 2 Na(+)(out) = inosine(in) + 2 Na(+)(in). In terms of biological role, sodium-dependent, pyrimidine- and purine-selective. Involved in the homeostasis of endogenous nucleosides. Exhibits the transport characteristics of the nucleoside transport system cib or N3 subtype (N3/cib) (with marked transport of both thymidine and inosine). Employs a 2:1 sodium/nucleoside ratio. Also able to transport gemcitabine, 3'-azido-3'-deoxythymidine (AZT), ribavirin and 3-deazauridine. This Mus musculus (Mouse) protein is Solute carrier family 28 member 3 (Slc28a3).